The chain runs to 513 residues: Histidine ammonia-lyase (513 aa).

The 5-imidazolinone (Ala-Gly) cross-link spans 144-146 (ASG). S145 is modified (2,3-didehydroalanine (Ser)).

It belongs to the PAL/histidase family. Contains an active site 4-methylidene-imidazol-5-one (MIO), which is formed autocatalytically by cyclization and dehydration of residues Ala-Ser-Gly.

It localises to the cytoplasm. It carries out the reaction L-histidine = trans-urocanate + NH4(+). It participates in amino-acid degradation; L-histidine degradation into L-glutamate; N-formimidoyl-L-glutamate from L-histidine: step 1/3. The sequence is that of Histidine ammonia-lyase from Streptococcus sanguinis (strain SK36).